A 339-amino-acid polypeptide reads, in one-letter code: Serpentine receptor class alpha-21 (339 aa).

5 consecutive transmembrane segments (helical) span residues 30-50 (FNFL…WLAI), 150-170 (FIAV…FYIA), 199-219 (VRTV…YLSV), 250-270 (ILIV…NLLL), and 282-302 (VLVA…PLVI).

Belongs to the nematode receptor-like protein sra family.

Its subcellular location is the membrane. The chain is Serpentine receptor class alpha-21 (sra-21) from Caenorhabditis elegans.